We begin with the raw amino-acid sequence, 275 residues long: Nitrogenase iron protein (275 aa).

9-16 contacts ATP; it reads GKGGIGKS. C97 is a binding site for [4Fe-4S] cluster. R100 is subject to ADP-ribosylarginine; by dinitrogenase reductase ADP-ribosyltransferase. C132 contributes to the [4Fe-4S] cluster binding site.

It belongs to the NifH/BchL/ChlL family. Homodimer. The cofactor is [4Fe-4S] cluster. In terms of processing, the reversible ADP-ribosylation of Arg-100 inactivates the nitrogenase reductase and regulates nitrogenase activity.

The enzyme catalyses N2 + 8 reduced [2Fe-2S]-[ferredoxin] + 16 ATP + 16 H2O = H2 + 8 oxidized [2Fe-2S]-[ferredoxin] + 2 NH4(+) + 16 ADP + 16 phosphate + 6 H(+). In terms of biological role, the key enzymatic reactions in nitrogen fixation are catalyzed by the nitrogenase complex, which has 2 components: the iron protein and the molybdenum-iron protein. In Methanococcus maripaludis (Methanococcus deltae), this protein is Nitrogenase iron protein (nifH).